The following is a 167-amino-acid chain: Large ribosomal subunit protein uL15 (167 aa).

Polar residues predominate over residues 1 to 10; it reads MKLNQISDNP. Residues 1–37 form a disordered region; it reads MKLNQISDNPGATKDRMRVGRGIGSGKGKTAGRGVKG. Residues 21-35 are compositionally biased toward gly residues; the sequence is RGIGSGKGKTAGRGV.

It belongs to the universal ribosomal protein uL15 family. As to quaternary structure, part of the 50S ribosomal subunit.

Functionally, binds to the 23S rRNA. This Methylobacterium radiotolerans (strain ATCC 27329 / DSM 1819 / JCM 2831 / NBRC 15690 / NCIMB 10815 / 0-1) protein is Large ribosomal subunit protein uL15.